A 360-amino-acid chain; its full sequence is MSNLENLQSQILADIAAAADEAALEAVRVGALGKKGSISALLATLGKMDPEQRKTEGAAINRAKEAVTDALTARRDVLKAAALDAKLAAETIDVTLPMREPAAEQGRLHPLSQVWDELTAIFADMGFSIAEGPDIETDDYNFTKLNFPEGHPAREMHDTFYFNPKEDGSRLLLRTHTSPVQVRTMLSQRPPIRVICPGRTYRSDSDQTHTPMFHQVEGLVIDKGSHLGHLKWILHEFCKAFFEVDNVNMRFRPSFFPFTEPSLEVDIQCRRGKDEIRFGEGEDWLEILGCGMVHPNVLTACGLDPDEYQGFAWGMGIDRIAMLKYGMSDLRQLFEADVRWLNHYGFKPLDIPTLAGGLSS.

Glu-260 is a binding site for Mg(2+).

It belongs to the class-II aminoacyl-tRNA synthetase family. Phe-tRNA synthetase alpha subunit type 1 subfamily. As to quaternary structure, tetramer of two alpha and two beta subunits. Mg(2+) is required as a cofactor.

The protein resides in the cytoplasm. The enzyme catalyses tRNA(Phe) + L-phenylalanine + ATP = L-phenylalanyl-tRNA(Phe) + AMP + diphosphate + H(+). This Rhodopseudomonas palustris (strain ATCC BAA-98 / CGA009) protein is Phenylalanine--tRNA ligase alpha subunit.